The chain runs to 206 residues: UPF0502 protein Acid_1185 (206 aa).

Belongs to the UPF0502 family.

This Solibacter usitatus (strain Ellin6076) protein is UPF0502 protein Acid_1185.